Here is a 432-residue protein sequence, read N- to C-terminus: Gamma-glutamyl phosphate reductase (432 aa).

Belongs to the gamma-glutamyl phosphate reductase family.

Its subcellular location is the cytoplasm. It carries out the reaction L-glutamate 5-semialdehyde + phosphate + NADP(+) = L-glutamyl 5-phosphate + NADPH + H(+). Its pathway is amino-acid biosynthesis; L-proline biosynthesis; L-glutamate 5-semialdehyde from L-glutamate: step 2/2. Its function is as follows. Catalyzes the NADPH-dependent reduction of L-glutamate 5-phosphate into L-glutamate 5-semialdehyde and phosphate. The product spontaneously undergoes cyclization to form 1-pyrroline-5-carboxylate. The sequence is that of Gamma-glutamyl phosphate reductase from Brachyspira hyodysenteriae (strain ATCC 49526 / WA1).